We begin with the raw amino-acid sequence, 335 residues long: Teichoic acids export ATP-binding protein TagH (335 aa).

The ABC transporter domain maps to 26–246; sequence IKGLFMPKSQ…YDEFVKWFNK (221 aa). 60–67 contributes to the ATP binding site; it reads GINGSGKS.

It belongs to the ABC transporter superfamily. Teichoic acids exporter (TC 3.A.1.104.1) family. In terms of assembly, the complex is composed of two ATP-binding proteins (TagH) and two transmembrane proteins (TagG).

The protein localises to the cell membrane. It carries out the reaction ATP + H2O + teichoic acidSide 1 = ADP + phosphate + teichoic acidSide 2.. Its function is as follows. Part of the ABC transporter complex TagGH involved in teichoic acids export. Responsible for energy coupling to the transport system. The polypeptide is Teichoic acids export ATP-binding protein TagH (Listeria monocytogenes serotype 4b (strain F2365)).